A 254-amino-acid chain; its full sequence is Imidazole glycerol phosphate synthase subunit HisF (254 aa).

Active-site residues include Asp-11 and Asp-130.

It belongs to the HisA/HisF family. In terms of assembly, heterodimer of HisH and HisF.

The protein localises to the cytoplasm. It carries out the reaction 5-[(5-phospho-1-deoxy-D-ribulos-1-ylimino)methylamino]-1-(5-phospho-beta-D-ribosyl)imidazole-4-carboxamide + L-glutamine = D-erythro-1-(imidazol-4-yl)glycerol 3-phosphate + 5-amino-1-(5-phospho-beta-D-ribosyl)imidazole-4-carboxamide + L-glutamate + H(+). Its pathway is amino-acid biosynthesis; L-histidine biosynthesis; L-histidine from 5-phospho-alpha-D-ribose 1-diphosphate: step 5/9. IGPS catalyzes the conversion of PRFAR and glutamine to IGP, AICAR and glutamate. The HisF subunit catalyzes the cyclization activity that produces IGP and AICAR from PRFAR using the ammonia provided by the HisH subunit. This chain is Imidazole glycerol phosphate synthase subunit HisF, found in Gloeobacter violaceus (strain ATCC 29082 / PCC 7421).